Here is a 502-residue protein sequence, read N- to C-terminus: Probable cobyric acid synthase (502 aa).

The 199-residue stretch at 250–448 (KITIGTLRLP…FHGIFHNFEF (199 aa)) folds into the GATase cobBQ-type domain. Catalysis depends on cysteine 330, which acts as the Nucleophile. The active site involves histidine 440.

This sequence belongs to the CobB/CobQ family. CobQ subfamily.

Its pathway is cofactor biosynthesis; adenosylcobalamin biosynthesis. Catalyzes amidations at positions B, D, E, and G on adenosylcobyrinic A,C-diamide. NH(2) groups are provided by glutamine, and one molecule of ATP is hydrogenolyzed for each amidation. This is Probable cobyric acid synthase from Methanosphaera stadtmanae (strain ATCC 43021 / DSM 3091 / JCM 11832 / MCB-3).